Reading from the N-terminus, the 187-residue chain is Elongation factor P (187 aa).

Belongs to the elongation factor P family.

It is found in the cytoplasm. It participates in protein biosynthesis; polypeptide chain elongation. In terms of biological role, involved in peptide bond synthesis. Stimulates efficient translation and peptide-bond synthesis on native or reconstituted 70S ribosomes in vitro. Probably functions indirectly by altering the affinity of the ribosome for aminoacyl-tRNA, thus increasing their reactivity as acceptors for peptidyl transferase. The protein is Elongation factor P of Synechococcus sp. (strain WH7803).